The sequence spans 125 residues: Fluoride-specific ion channel FluC (125 aa).

The next 4 membrane-spanning stretches (helical) occupy residues 7–27 (FFIVGAGGFVGSVMRYLMAVV), 36–56 (GFPYATLAVNVLGSFMIGFLS), 63–83 (PYGRLFVMVGVLGGFTTFSTF), and 96–116 (FIFASLNVLLNVLLCLVGVFC). Residues Gly75 and Thr78 each contribute to the Na(+) site.

It belongs to the fluoride channel Fluc/FEX (TC 1.A.43) family.

It is found in the cell inner membrane. It catalyses the reaction fluoride(in) = fluoride(out). With respect to regulation, na(+) is not transported, but it plays an essential structural role and its presence is essential for fluoride channel function. In terms of biological role, fluoride-specific ion channel. Important for reducing fluoride concentration in the cell, thus reducing its toxicity. This chain is Fluoride-specific ion channel FluC, found in Elusimicrobium minutum (strain Pei191).